The sequence spans 505 residues: Lysine--tRNA ligase (505 aa).

Glutamate 415 and glutamate 422 together coordinate Mg(2+).

The protein belongs to the class-II aminoacyl-tRNA synthetase family. Homodimer. It depends on Mg(2+) as a cofactor.

The protein localises to the cytoplasm. The catalysed reaction is tRNA(Lys) + L-lysine + ATP = L-lysyl-tRNA(Lys) + AMP + diphosphate. This Yersinia pseudotuberculosis serotype O:1b (strain IP 31758) protein is Lysine--tRNA ligase.